Here is a 68-residue protein sequence, read N- to C-terminus: Cell division protein ZapB (68 aa).

Positions 3–58 (LELLSKLETKIQAALETIELLKMELEEEKQKNHTLNEQNQQLSQDLTSWNEKVTGL) form a coiled coil.

It belongs to the ZapB family. As to quaternary structure, homodimer. The ends of the coiled-coil dimer bind to each other, forming polymers. Interacts with FtsZ.

It localises to the cytoplasm. Functionally, non-essential, abundant cell division factor that is required for proper Z-ring formation. It is recruited early to the divisome by direct interaction with FtsZ, stimulating Z-ring assembly and thereby promoting cell division earlier in the cell cycle. Its recruitment to the Z-ring requires functional FtsA or ZipA. This Shewanella loihica (strain ATCC BAA-1088 / PV-4) protein is Cell division protein ZapB.